The chain runs to 282 residues: MTAAADLYCVMGNPIAHSRSPWIHARFAQLTGQSLHYERRLVPLDGFAQALQSFAAEGGRGCNITVPFKLEAAQLATTRSERVQLAGAANTLVFDGGSIHADNTDGLGLVADITQGAGVPLAGRDVLLVGAGGAAAGVLGPLLRQHPRRIAVVNRTPARAQALVDSHAALAALQKTELLALDMQAPGADFDVIINATASSLEGGPVPVPASVLRPGSLAYDMMYGPAAQPFLDWATGHGATARDGLGMLVEQAAEAFLLWRGVRPPSAPVLQELRAAIAAGA.

Shikimate-binding positions include 18-20 (SRS) and Thr65. Lys69 serves as the catalytic Proton acceptor. An NADP(+)-binding site is contributed by Glu81. Positions 90 and 105 each coordinate shikimate. NADP(+) is bound by residues 130-134 (GAGGA), 154-159 (NRTPAR), and Met222. Tyr224 is a binding site for shikimate. Gly245 contributes to the NADP(+) binding site.

It belongs to the shikimate dehydrogenase family. In terms of assembly, homodimer.

The enzyme catalyses shikimate + NADP(+) = 3-dehydroshikimate + NADPH + H(+). The protein operates within metabolic intermediate biosynthesis; chorismate biosynthesis; chorismate from D-erythrose 4-phosphate and phosphoenolpyruvate: step 4/7. Involved in the biosynthesis of the chorismate, which leads to the biosynthesis of aromatic amino acids. Catalyzes the reversible NADPH linked reduction of 3-dehydroshikimate (DHSA) to yield shikimate (SA). The sequence is that of Shikimate dehydrogenase (NADP(+)) from Acidovorax sp. (strain JS42).